The primary structure comprises 476 residues: Lactate utilization protein B (476 aa).

4Fe-4S ferredoxin-type domains are found at residues 304 to 334 (GTEF…GHSY) and 353 to 382 (YDDY…LHEL). [4Fe-4S] cluster is bound by residues cysteine 313, cysteine 316, cysteine 319, cysteine 323, cysteine 366, cysteine 369, and cysteine 373. Residues 440-476 (KGPGPLKAWTESREFPAPSKERFRDWFQTRQKGGNPS) form a disordered region. The segment covering 449–466 (TESREFPAPSKERFRDWF) has biased composition (basic and acidic residues). Polar residues predominate over residues 467–476 (QTRQKGGNPS).

This sequence belongs to the LutB/YkgF family.

Functionally, is involved in L-lactate degradation and allows cells to grow with lactate as the sole carbon source. Has probably a role as an electron transporter during oxidation of L-lactate. The sequence is that of Lactate utilization protein B from Geobacillus kaustophilus (strain HTA426).